Reading from the N-terminus, the 368-residue chain is Histidinol-phosphate aminotransferase (368 aa).

The residue at position 223 (Lys223) is an N6-(pyridoxal phosphate)lysine.

The protein belongs to the class-II pyridoxal-phosphate-dependent aminotransferase family. Histidinol-phosphate aminotransferase subfamily. As to quaternary structure, homodimer. It depends on pyridoxal 5'-phosphate as a cofactor.

The enzyme catalyses L-histidinol phosphate + 2-oxoglutarate = 3-(imidazol-4-yl)-2-oxopropyl phosphate + L-glutamate. It participates in amino-acid biosynthesis; L-histidine biosynthesis; L-histidine from 5-phospho-alpha-D-ribose 1-diphosphate: step 7/9. The sequence is that of Histidinol-phosphate aminotransferase from Rhodospirillum rubrum (strain ATCC 11170 / ATH 1.1.1 / DSM 467 / LMG 4362 / NCIMB 8255 / S1).